The primary structure comprises 503 residues: Lysine--tRNA ligase (503 aa).

The Mg(2+) site is built by Glu-414 and Glu-421.

Belongs to the class-II aminoacyl-tRNA synthetase family. As to quaternary structure, homodimer. The cofactor is Mg(2+).

The protein localises to the cytoplasm. The catalysed reaction is tRNA(Lys) + L-lysine + ATP = L-lysyl-tRNA(Lys) + AMP + diphosphate. The sequence is that of Lysine--tRNA ligase from Neisseria gonorrhoeae (strain NCCP11945).